The primary structure comprises 279 residues: Acyl-[acyl-carrier-protein]--UDP-N-acetylglucosamine O-acyltransferase (279 aa).

The interval Ile-256 to Ser-279 is disordered.

This sequence belongs to the transferase hexapeptide repeat family. LpxA subfamily. As to quaternary structure, homotrimer.

It is found in the cytoplasm. It carries out the reaction a (3R)-hydroxyacyl-[ACP] + UDP-N-acetyl-alpha-D-glucosamine = a UDP-3-O-[(3R)-3-hydroxyacyl]-N-acetyl-alpha-D-glucosamine + holo-[ACP]. It participates in glycolipid biosynthesis; lipid IV(A) biosynthesis; lipid IV(A) from (3R)-3-hydroxytetradecanoyl-[acyl-carrier-protein] and UDP-N-acetyl-alpha-D-glucosamine: step 1/6. Its function is as follows. Involved in the biosynthesis of lipid A, a phosphorylated glycolipid that anchors the lipopolysaccharide to the outer membrane of the cell. The sequence is that of Acyl-[acyl-carrier-protein]--UDP-N-acetylglucosamine O-acyltransferase from Chlamydia caviae (strain ATCC VR-813 / DSM 19441 / 03DC25 / GPIC) (Chlamydophila caviae).